The chain runs to 184 residues: Peptide deformylase (184 aa).

Residues C99 and H141 each coordinate Fe cation. The active site involves E142. H145 provides a ligand contact to Fe cation.

This sequence belongs to the polypeptide deformylase family. Requires Fe(2+) as cofactor.

The catalysed reaction is N-terminal N-formyl-L-methionyl-[peptide] + H2O = N-terminal L-methionyl-[peptide] + formate. In terms of biological role, removes the formyl group from the N-terminal Met of newly synthesized proteins. Requires at least a dipeptide for an efficient rate of reaction. N-terminal L-methionine is a prerequisite for activity but the enzyme has broad specificity at other positions. In Chlamydia abortus (strain DSM 27085 / S26/3) (Chlamydophila abortus), this protein is Peptide deformylase.